The primary structure comprises 287 residues: Elongation factor Ts (287 aa).

The segment at 80–83 is involved in Mg(2+) ion dislocation from EF-Tu; the sequence is TDFL.

Belongs to the EF-Ts family.

The protein resides in the cytoplasm. Associates with the EF-Tu.GDP complex and induces the exchange of GDP to GTP. It remains bound to the aminoacyl-tRNA.EF-Tu.GTP complex up to the GTP hydrolysis stage on the ribosome. In Pseudomonas fluorescens (strain Pf0-1), this protein is Elongation factor Ts.